The chain runs to 298 residues: NAD kinase (298 aa).

D80 functions as the Proton acceptor in the catalytic mechanism. Residues 80–81 (DG), 154–155 (ND), R182, D184, 195–200 (TAYALS), A219, and Q253 each bind NAD(+).

This sequence belongs to the NAD kinase family. Requires a divalent metal cation as cofactor.

It is found in the cytoplasm. The enzyme catalyses NAD(+) + ATP = ADP + NADP(+) + H(+). In terms of biological role, involved in the regulation of the intracellular balance of NAD and NADP, and is a key enzyme in the biosynthesis of NADP. Catalyzes specifically the phosphorylation on 2'-hydroxyl of the adenosine moiety of NAD to yield NADP. The polypeptide is NAD kinase (Acidovorax sp. (strain JS42)).